Here is a 153-residue protein sequence, read N- to C-terminus: Cytochrome c-554 (153 aa).

Residues 1–20 (MRPIPALALTFSLVAMPALA) form the signal peptide. Q21 bears the Pyrrolidone carboxylic acid mark. Residues M37, C142, C145, and H146 each contribute to the heme c site.

In terms of processing, binds 1 heme c group covalently per subunit.

Its subcellular location is the periplasm. Its function is as follows. Monoheme c-type cytochrome, that is particularly expressed when cells generate energy via aerobic respiration. The polypeptide is Cytochrome c-554 (cycF) (Cereibacter sphaeroides (strain ATCC 17023 / DSM 158 / JCM 6121 / CCUG 31486 / LMG 2827 / NBRC 12203 / NCIMB 8253 / ATH 2.4.1.) (Rhodobacter sphaeroides)).